The primary structure comprises 198 residues: Armadillo repeat-containing protein 7 (198 aa).

2 ARM repeats span residues 57 to 99 and 100 to 140; these read QVLD…HAGG and VPLI…TATP. Serine 169 carries the phosphoserine modification.

As to quaternary structure, component of the minor spliceosome. Within this complex, interacts with RBM48.

Functionally, as a component of the minor spliceosome, involved in the splicing of U12-type introns in pre-mRNAs. The sequence is that of Armadillo repeat-containing protein 7 (ARMC7) from Homo sapiens (Human).